A 977-amino-acid polypeptide reads, in one-letter code: Ephrin type-A receptor 2 (977 aa).

The N-terminal stretch at 1-25 is a signal peptide; it reads MELRAVGFCLALLWGCALAAAAAQG. A mediates interaction with CLDN4 region spans residues 1–205; sequence MELRAVGFCL…YYKKCPEMLQ (205 aa). The Extracellular portion of the chain corresponds to 26-538; that stretch reads KEVVLLDFAA…STEGSANMAV (513 aa). In terms of domain architecture, Eph LBD spans 27–205; sequence EVVLLDFAAM…YYKKCPEMLQ (179 aa). Disulfide bonds link C69-C187 and C104-C114. Residues 329-433 form the Fibronectin type-III 1 domain; it reads PPSAPNYLTA…TSRSFRTASV (105 aa). N-linked (GlcNAc...) asparagine glycans are attached at residues N408 and N436. Positions 439–530 constitute a Fibronectin type-III 2 domain; the sequence is EPPKVRLEDR…KVHEFQTLST (92 aa). The helical transmembrane segment at 539–559 threads the bilayer; sequence IGGVAVGVVLLLVLAGVGLFI. Residues 560 to 977 are Cytoplasmic-facing; it reads HRRRRNLRAR…DQVNTVGIPI (418 aa). Phosphoserine is present on residues S571 and S580. Phosphotyrosine; by autocatalysis is present on residues Y589 and Y595. The segment at 607 to 907 is mediates interaction with ARHGEF16; sequence TEIHPSCVAR…STSGSEGVPF (301 aa). The region spanning 614–876 is the Protein kinase domain; it reads VARQKVIGAG…DIVSILDKLI (263 aa). 620–628 serves as a coordination point for ATP; sequence IGAGEFGEV. Residue Y629 is modified to Phosphotyrosine. K647 lines the ATP pocket. T648 is subject to Phosphothreonine. The residue at position 736 (Y736) is a Phosphotyrosine; by autocatalysis. The Proton acceptor role is filled by D740. At Y773 the chain carries Phosphotyrosine; by autocatalysis. Residues S870, S893, S898, and S902 each carry the phosphoserine modification. The negatively regulates interaction with ARHGEF16 stretch occupies residues 887-977; that stretch reads DFDPRVSIRL…DQVNTVGIPI (91 aa). One can recognise an SAM domain in the interval 905–969; the sequence is VPFRTVSEWL…AYSLLGLKDQ (65 aa). Y922 is subject to Phosphotyrosine; by autocatalysis. Y931 bears the Phosphotyrosine mark. The PDZ-binding motif lies at 975–977; sequence IPI.

It belongs to the protein kinase superfamily. Tyr protein kinase family. Ephrin receptor subfamily. Homodimer. Interacts with INPPL1; regulates activated EPHA2 endocytosis and degradation. Interacts (inactivated form) with PTK2/FAK1 and interacts (EFNA1 ligand-activated form) with PTPN11; regulates integrin-mediated adhesion. Interacts with ARHGEF16, DOCK4 and ELMO2; mediates ligand-independent activation of RAC1 which stimulates cell migration. Interacts with CLDN4; phosphorylates CLDN4 and may regulate tight junctions. Interacts with ACP1. Interacts with CEMIP. Interacts with NCK1; may regulate EPHA2 activity in cell migration and adhesion. Interacts with SLA. Interacts (phosphorylated form) with VAV2, VAV3 and PI3-kinase p85 subunit (PIK3R1, PIK3R2 or PIK3R3); critical for the EFNA1-induced activation of RAC1 which stimulates cell migration. Interacts with ANKS1A. Interacts with TIMD4. Autophosphorylates. Phosphorylated at Ser-898 by PKB; serum-induced phosphorylation which targets EPHA2 to the cell leading edge and stimulates cell migration. Phosphorylation by PKB is inhibited by EFNA1-activated EPHA2 which regulates PKB activity via a reciprocal regulatory loop. Phosphorylated on tyrosine upon binding and activation by EFNA1. Phosphorylated residues Tyr-589 and Tyr-595 are required for binding VAV2 and VAV3 while phosphorylated residues Tyr-736 and Tyr-931 are required for binding PI3-kinase p85 subunit (PIK3R1, PIK3R2 or PIK3R3). These phosphorylated residues are critical for recruitment of VAV2 and VAV3 and PI3-kinase p85 subunit which transduce downstream signaling to activate RAC1 GTPase and cell migration. Dephosphorylation of Tyr-931 by PTPRF prevents the interaction of EPHA2 with NCK1. Phosphorylated at Ser-898 in response to TNF by RPS6KA1 and RPS6KA3; RPS6KA-EPHA2 signaling pathway controls cell migration. Phosphorylated at Ser-898 by PKA; blocks cell retraction induced by EPHA2 kinase activity. Dephosphorylated by ACP1. Post-translationally, ubiquitinated by CHIP/STUB1. Ubiquitination is regulated by the HSP90 chaperone and regulates the receptor stability and activity through proteasomal degradation. ANKS1A prevents ubiquitination and degradation. Expressed in the lung, intestine and liver. Expressed in myogenic progenitor cells.

It localises to the cell membrane. It is found in the cell projection. Its subcellular location is the ruffle membrane. The protein localises to the lamellipodium membrane. The protein resides in the cell junction. It localises to the focal adhesion. The catalysed reaction is L-tyrosyl-[protein] + ATP = O-phospho-L-tyrosyl-[protein] + ADP + H(+). Functionally, receptor tyrosine kinase which binds promiscuously membrane-bound ephrin-A family ligands residing on adjacent cells, leading to contact-dependent bidirectional signaling into neighboring cells. The signaling pathway downstream of the receptor is referred to as forward signaling while the signaling pathway downstream of the ephrin ligand is referred to as reverse signaling. Activated by the ligand ephrin-A1/EFNA1 regulates migration, integrin-mediated adhesion, proliferation and differentiation of cells. Regulates cell adhesion and differentiation through DSG1/desmoglein-1 and inhibition of the ERK1/ERK2 signaling pathway. May also participate in UV radiation-induced apoptosis and have a ligand-independent stimulatory effect on chemotactic cell migration. During development, may function in distinctive aspects of pattern formation and subsequently in development of several fetal tissues. Involved for instance in angiogenesis, in early hindbrain development and epithelial proliferation and branching morphogenesis during mammary gland development. Engaged by the ligand ephrin-A5/EFNA5 may regulate lens fiber cells shape and interactions and be important for lens transparency development and maintenance. With ephrin-A2/EFNA2 may play a role in bone remodeling through regulation of osteoclastogenesis and osteoblastogenesis. The chain is Ephrin type-A receptor 2 (Epha2) from Mus musculus (Mouse).